Here is a 1039-residue protein sequence, read N- to C-terminus: Potassium-transporting ATPase alpha chain 2 (1039 aa).

Residues 1-102 (MHQKTPEIYS…NSLTPPKQTP (102 aa)) are Cytoplasmic-facing. Residues 103-123 (EIVKFLKQMVGGFSILLWVGA) traverse the membrane as a helical segment. The Lumenal portion of the chain corresponds to 124–146 (FLCWIAYGIQYSSDKSASLNNVY). The helical transmembrane segment at 147 to 167 (LGCVLGLVVILTGIFAYYQEA) threads the bilayer. Residues 168–303 (KSTNIMSSFN…NEKTPIAIEI (136 aa)) are Cytoplasmic-facing. Residues 304-323 (EHFVHIVAGVAVSIGILFFI) form a helical membrane-spanning segment. Over 324-335 (IAVSLKYQVLDS) the chain is Lumenal. The chain crosses the membrane as a helical span at residues 336-353 (IIFLIGIIVANVPEGLLA). Residues 354–787 (TVTVTLSLTA…EEGRLIFDNL (434 aa)) lie on the Cytoplasmic side of the membrane. The active-site 4-aspartylphosphate intermediate is the aspartate 391. Positions 732 and 736 each coordinate Mg(2+). A helical membrane pass occupies residues 788–807 (KKTIAYSLTKNIAELCPFLI). The Lumenal portion of the chain corresponds to 808 to 817 (YIIVGLPLPI). The helical transmembrane segment at 818-838 (GTITILFIDLGTDIIPSIALA) threads the bilayer. The Cytoplasmic portion of the chain corresponds to 839–858 (YEKAESDIMNRKPRHKNKDR). A helical transmembrane segment spans residues 859-881 (LVNQPLAVYSYLHIGLMQALGAF). Residues 882-933 (LVYFTVYAQEGFLPRTLINLRVEWEKDYVNDLKDSYGQEWTRYQREYLEWTG) lie on the Lumenal side of the membrane. A helical transmembrane segment spans residues 934 to 953 (YTAFFVGILVQQIADLIIRK). Over 954–967 (TRRNSIFQQGLFRN) the chain is Cytoplasmic. Residue serine 958 is modified to Phosphoserine; by PKA. A helical transmembrane segment spans residues 968-986 (KVIWVGITSQIIIGLILSY). Topologically, residues 987–1001 (GLGSVTALSFTMLRA) are lumenal. A helical membrane pass occupies residues 1002–1022 (QYWFVAVPHAILIWVYDEVRK). The Cytoplasmic segment spans residues 1023–1039 (LFIRLYPGSWWDKNMYY).

This sequence belongs to the cation transport ATPase (P-type) (TC 3.A.3) family. Type IIC subfamily. The ATPase pump is composed of a catalytic alpha subunit and an auxiliary non-catalytic beta subunit. The alpha subunit pairs with the beta subunit of gastric H(+)/K(+) ATPase ATP4B or the beta subunit of Na(+)/K(+) ATPases ATP1B1 and ATP1B3; this interaction is required for the formation of a functionally active pump and its targeting at the plasma membrane. Expressed in airway epithelial cells (at protein level). Found in skin and kidney. Detected in prostate basal cells (at protein level). Expression is increased in benign prostate hyperplasia and tumor tissues (at protein level).

Its subcellular location is the apical cell membrane. The catalysed reaction is K(+)(out) + ATP + H2O + H(+)(in) = K(+)(in) + ADP + phosphate + 2 H(+)(out). The enzyme catalyses K(+)(out) + Na(+)(in) + ATP + H2O = K(+)(in) + Na(+)(out) + ADP + phosphate + H(+). With respect to regulation, the ATPase activity is regulated by monovalent cations and pH. Up-regulated by K(+) ions in a dose-dependent way. Down-regulated by Na(+) ions. Inhibited by Na(+)/K(+)-ATPase inhibitor ouabain and H(+)/K(+)-ATPase inhibitor SCH-28080 with an intermediate sensitivity to completely resistant Na(+)/K(+)-ATPases and highly sensitive H(+)/K(+)-ATPases. The catalytic subunit of a H(+)/K(+) ATPase and/or Na(+)/K(+) ATPase pump which transports K(+) ions in exchange for Na(+) and/or H(+) ions across the apical membrane of epithelial cells. Uses ATP as an energy source to pump K(+) ions into the cell while transporting Na(+) and/or H(+) ions to the extracellular compartment. Involved in the maintenance of electrolyte homeostasis through K(+) ion absorption in kidney and colon. In the airway epithelium, may play a primary role in mucus acidification regulating its viscosity and clearance. The sequence is that of Potassium-transporting ATPase alpha chain 2 from Homo sapiens (Human).